The primary structure comprises 317 residues: Inactive serine protease 45 (317 aa).

A signal peptide spans 1 to 35; it reads MATSLRGLDAGPGSLRRWILICFAALLLLPPRPNL. Asn-40 carries an N-linked (GlcNAc...) asparagine glycan. One can recognise a Peptidase S1 domain in the interval 44 to 291; the sequence is PVCGTPWWPD…YTIWIKDQVS (248 aa). A disulfide bond links Cys-75 and Cys-91. Asn-110 is a glycosylation site (N-linked (GlcNAc...) asparagine). Cystine bridges form between Cys-172-Cys-249, Cys-207-Cys-230, and Cys-239-Cys-267. An N-linked (GlcNAc...) asparagine glycan is attached at Asn-272.

Belongs to the peptidase S1 family.

It localises to the secreted. In Mus musculus (Mouse), this protein is Inactive serine protease 45.